A 62-amino-acid chain; its full sequence is Large ribosomal subunit protein bL28 (62 aa).

The tract at residues 1–23 is disordered; that stretch reads MARRCFVTGKSAKAGNARSHSMR.

This sequence belongs to the bacterial ribosomal protein bL28 family.

This Brevibacillus brevis (strain 47 / JCM 6285 / NBRC 100599) protein is Large ribosomal subunit protein bL28.